We begin with the raw amino-acid sequence, 202 residues long: FMN-dependent NADH:quinone oxidoreductase (202 aa).

Residues Ser10, 16–18 (SHS), and 96–99 (MYNF) each bind FMN.

This sequence belongs to the azoreductase type 1 family. In terms of assembly, homodimer. It depends on FMN as a cofactor.

The enzyme catalyses 2 a quinone + NADH + H(+) = 2 a 1,4-benzosemiquinone + NAD(+). The catalysed reaction is N,N-dimethyl-1,4-phenylenediamine + anthranilate + 2 NAD(+) = 2-(4-dimethylaminophenyl)diazenylbenzoate + 2 NADH + 2 H(+). Functionally, quinone reductase that provides resistance to thiol-specific stress caused by electrophilic quinones. Also exhibits azoreductase activity. Catalyzes the reductive cleavage of the azo bond in aromatic azo compounds to the corresponding amines. This Hydrogenovibrio crunogenus (strain DSM 25203 / XCL-2) (Thiomicrospira crunogena) protein is FMN-dependent NADH:quinone oxidoreductase.